The primary structure comprises 321 residues: DNA-directed RNA polymerase subunit alpha (321 aa).

Positions 1–235 are alpha N-terminal domain (alpha-NTD); sequence MAYQIECLET…DLFSPLKEVP (235 aa). Positions 252 to 321 are alpha C-terminal domain (alpha-CTD); that stretch reads QIPIEQLNLS…TLPPQKAARN (70 aa).

Belongs to the RNA polymerase alpha chain family. As to quaternary structure, homodimer. In cyanobacteria the RNAP catalytic core is composed of 2 alpha, 1 beta, 1 beta', 1 gamma and 1 omega subunit. When a sigma factor is associated with the core the holoenzyme is formed, which can initiate transcription.

The enzyme catalyses RNA(n) + a ribonucleoside 5'-triphosphate = RNA(n+1) + diphosphate. DNA-dependent RNA polymerase catalyzes the transcription of DNA into RNA using the four ribonucleoside triphosphates as substrates. This is DNA-directed RNA polymerase subunit alpha from Thermosynechococcus vestitus (strain NIES-2133 / IAM M-273 / BP-1).